The primary structure comprises 81 residues: Sulfur carrier protein TusA (81 aa).

Cys-19 (cysteine persulfide intermediate) is an active-site residue.

This sequence belongs to the sulfur carrier protein TusA family.

Its subcellular location is the cytoplasm. Functionally, sulfur carrier protein which probably makes part of a sulfur-relay system. The sequence is that of Sulfur carrier protein TusA from Shewanella oneidensis (strain ATCC 700550 / JCM 31522 / CIP 106686 / LMG 19005 / NCIMB 14063 / MR-1).